Reading from the N-terminus, the 263-residue chain is Proline rich transmembrane protein 1B (263 aa).

A compositionally biased stretch (gly residues) spans 1–17 (MEAGAGGAGSDTKGGGS). Positions 1–107 (MEAGAGGAGS…IGFVGEPPPY (107 aa)) are disordered. 2 stretches are compositionally biased toward low complexity: residues 37–47 (QMPAQPALPQL) and 75–86 (DAPAQAAGEAGP). A run of 2 helical transmembrane segments spans residues 190–210 (MMESVLVTLFCCLLTGLIAIV) and 238–258 (VLFSLLFGVFVSTSWVIYVVV).

Belongs to the CD225/Dispanin family.

The protein resides in the membrane. This chain is Proline rich transmembrane protein 1B, found in Homo sapiens (Human).